Consider the following 185-residue polypeptide: Elongation factor P (185 aa).

This sequence belongs to the elongation factor P family.

The protein resides in the cytoplasm. The protein operates within protein biosynthesis; polypeptide chain elongation. In terms of biological role, involved in peptide bond synthesis. Stimulates efficient translation and peptide-bond synthesis on native or reconstituted 70S ribosomes in vitro. Probably functions indirectly by altering the affinity of the ribosome for aminoacyl-tRNA, thus increasing their reactivity as acceptors for peptidyl transferase. The chain is Elongation factor P from Salinispora tropica (strain ATCC BAA-916 / DSM 44818 / JCM 13857 / NBRC 105044 / CNB-440).